Consider the following 360-residue polypeptide: Phenylalanine--tRNA ligase alpha subunit (360 aa).

E260 contributes to the Mg(2+) binding site.

It belongs to the class-II aminoacyl-tRNA synthetase family. Phe-tRNA synthetase alpha subunit type 1 subfamily. As to quaternary structure, tetramer of two alpha and two beta subunits. Requires Mg(2+) as cofactor.

It localises to the cytoplasm. It carries out the reaction tRNA(Phe) + L-phenylalanine + ATP = L-phenylalanyl-tRNA(Phe) + AMP + diphosphate + H(+). This Rhizobium rhizogenes (strain K84 / ATCC BAA-868) (Agrobacterium radiobacter) protein is Phenylalanine--tRNA ligase alpha subunit.